The following is a 224-amino-acid chain: Transmembrane protein C16orf54 (224 aa).

Thr4 is a glycosylation site (O-linked (GalNAc...) threonine). A helical membrane pass occupies residues 32-52 (IPIMLVLATLAALFILTTAVL). Disordered regions lie at residues 104–138 (TDRA…SNLG) and 152–203 (WGPQ…GLQP). Phosphothreonine occurs at positions 112 and 116. Ser194 is modified (phosphoserine).

Post-translationally, O-glycosylated with core 1 or possibly core 8 glycans.

It is found in the membrane. This is Transmembrane protein C16orf54 (C16orf54) from Homo sapiens (Human).